An 830-amino-acid polypeptide reads, in one-letter code: Nucleolar complex-associated protein 3 (830 aa).

Disordered stretches follow at residues 1-22, 67-86, 112-169, 391-436, and 802-830; these read MGKN…DVAE, KYEE…GNGE, KSKL…EETP, GKPN…KIRD, and LQSE…KKQI. Coiled-coil stretches lie at residues 61–81 and 111–156; these read VMTV…LQEE and KKSK…HEKD. Basic and acidic residues predominate over residues 67-84; that stretch reads KYEEERSKRKTLQEEKGN. A compositionally biased stretch (acidic residues) spans 118 to 129; it reads AETDEAEKDVLE. The span at 130–140 shows a compositional bias: basic and acidic residues; that stretch reads DEHVLNKSQRR. A Nuclear localization signal 1 motif is present at residues 138 to 145; it reads QRREKAKK. Positions 141–150 are enriched in basic residues; sequence EKAKKSKREA. Over residues 159–168 the composition is skewed to acidic residues; sequence DEILQEEEET. Positions 391–400 are enriched in basic and acidic residues; it reads GKPNKEDEHN. Residues 400 to 429 are a coiled coil; that stretch reads NKKYKKNNKRKTQEEQNQVQENERKKSKKD. Positions 408 to 415 match the Nuclear localization signal 2 motif; the sequence is KRKTQEEQ. Residues 420-436 are compositionally biased toward basic and acidic residues; the sequence is ENERKKSKKDMMSKIRD. The Nuclear localization signal 3 signature appears at 806–813; the sequence is EKKPLKKQ. Residues 817-830 are compositionally biased toward basic residues; sequence VKKKLKNPKSKKQI.

Belongs to the CBF/MAK21 family. Component of nucleolar complexes. Interacts with RBL and NOC2 in both the nucleolus and nucleoplasm.

It is found in the nucleus. Its subcellular location is the nucleolus. The protein localises to the nucleoplasm. Functionally, may be required for synthesis of 60S ribosomal subunits and the transport of pre-ribosomes from the nucleoplasm to the cytoplasm. Also required for initiation of DNA replication. The protein is Nucleolar complex-associated protein 3 of Arabidopsis thaliana (Mouse-ear cress).